A 99-amino-acid chain; its full sequence is MKFIAVVAALTASLAMAAPTESSTDTTYIACPISLYGNAQCCATDILGLANLDCESPTDVPRDAGHFQRTCADVGKRARCCAIPVLGQALLCIQPAGAN.

An N-terminal signal peptide occupies residues 1–26 (MKFIAVVAALTASLAMAAPTESSTDT). Disulfide bonds link cysteine 31-cysteine 80, cysteine 41-cysteine 71, cysteine 42-cysteine 54, and cysteine 81-cysteine 92.

It belongs to the cerato-ulmin hydrophobin family. As to quaternary structure, homotetramer. Further self-assembles to form highly ordered films at water-air interfaces through intermolecular interactions.

The protein resides in the secreted. The protein localises to the cell wall. Aerial growth, conidiation, and dispersal of filamentous fungi in the environment rely upon a capability of their secreting small amphipathic proteins called hydrophobins (HPBs) with low sequence identity. Class I can self-assemble into an outermost layer of rodlet bundles on aerial cell surfaces, conferring cellular hydrophobicity that supports fungal growth, development and dispersal; whereas Class II form highly ordered films at water-air interfaces through intermolecular interactions but contribute nothing to the rodlet structure. HFB1 is a class II hydrophobin that shows antifungal activity against pathogenic and opportunistic fungi such as Cryptococcus neoformans, Nakaseomyces glabrataa, or Candida tropicalis. The protein is Class II hydrophobin 1 of Sodiomyces alkalinus (strain CBS 110278 / VKM F-3762 / F11) (Alkaliphilic filamentous fungus).